We begin with the raw amino-acid sequence, 356 residues long: Nuclear hormone receptor family member nhr-42 (356 aa).

A DNA-binding region (nuclear receptor) is located at residues Ser7–Ser82. Residues Cys10–Cys30 form an NR C4-type zinc finger. Residues Cys48 to Cys70 form an NR C4-type; atypical zinc finger. In terms of domain architecture, NR LBD spans Thr108–Glu356.

It belongs to the nuclear hormone receptor family.

The protein localises to the nucleus. In terms of biological role, orphan nuclear receptor. The protein is Nuclear hormone receptor family member nhr-42 (nhr-42) of Caenorhabditis elegans.